Consider the following 788-residue polypeptide: uncharacterized protein (788 aa).

Residues 485–693 form the Adrift-type SAM-dependent 2'-O-MTase domain; that stretch reads EMITTAWIKL…IYIVLKSYKG (209 aa). S-adenosyl-L-methionine-binding residues include glycine 521 and aspartate 604. Lysine 645 functions as the Proton acceptor in the catalytic mechanism.

This is an uncharacterized protein from Acanthamoeba polyphaga (Amoeba).